The sequence spans 140 residues: Probable deoxyuridine 5'-triphosphate nucleotidohydrolase (140 aa).

Substrate-binding positions include 62-64 (RSG), 76-79 (GVID), Arg130, and 135-136 (FG).

Belongs to the dUTPase family. In terms of assembly, homotrimer. The cofactor is Mg(2+).

It catalyses the reaction dUTP + H2O = dUMP + diphosphate + H(+). Its pathway is pyrimidine metabolism; dUMP biosynthesis; dUMP from dCTP (dUTP route): step 2/2. This enzyme is involved in nucleotide metabolism: it produces dUMP, the immediate precursor of thymidine nucleotides and it decreases the intracellular concentration of dUTP so that uracil cannot be incorporated into DNA. This is Probable deoxyuridine 5'-triphosphate nucleotidohydrolase from Schizosaccharomyces pombe (strain 972 / ATCC 24843) (Fission yeast).